Here is a 397-residue protein sequence, read N- to C-terminus: P2X purinoceptor 3 (397 aa).

At 1–20 (MNCISDFFTYETTKSVVVKS) the chain is on the cytoplasmic side. The helical transmembrane segment at 21 to 43 (WTIGIINRAVQLLIISYFVGWVF) threads the bilayer. At 44–322 (LHEKAYQVRD…AGKFNIIPTI (279 aa)) the chain is on the extracellular side. Positions 63 and 65 each coordinate ATP. 3 disulfides stabilise this stretch: Cys107-Cys153, Cys116-Cys137, and Cys122-Cys147. Mg(2+) is bound at residue Glu111. Residue Asn139 is glycosylated (N-linked (GlcNAc...) asparagine). Asp158 contacts Mg(2+). Ca(2+) is bound at residue Asp158. The N-linked (GlcNAc...) asparagine glycan is linked to Asn170. Residue Thr172 coordinates ATP. N-linked (GlcNAc...) asparagine glycosylation occurs at Asn194. 2 disulfide bridges follow: Cys203-Cys213 and Cys247-Cys256. Residues Ser275, Asn279, and Arg281 each contribute to the ATP site. N-linked (GlcNAc...) asparagine glycosylation is present at Asn290. Lys299 contacts ATP. The chain crosses the membrane as a helical span at residues 323–341 (ISSVAAFTSVGVGTVLCDI). At 342–397 (ILLNFLKGADHYKARKFEEVTETTLKGTASTNPVFASDQATVEKQSTDSGAYSIGH) the chain is on the cytoplasmic side.

Belongs to the P2X receptor family. Homotrimer. Forms heterotrimer with P2RX2. Heterotrimeric P2RX2/3 has a ligand dose-response profile that is distinct from either homotrimeric P2RX2 or P2RX3. Selectively expressed in sensory ganglia.

The protein localises to the cell membrane. It carries out the reaction Ca(2+)(in) = Ca(2+)(out). The enzyme catalyses Na(+)(in) = Na(+)(out). Has high sensitivity to ATP. Fast activation by external ATP. Exhibits rapid desensitization. Sensitives to the ATP agonist:alpha/beta-methylene-ATP. Subject to allosteric inhibition by AF-219. Mg(2+) and Ca(2+) slow deactivation of P2RX3. Its function is as follows. Extracellular ATP-activated non-selective cation channel. Plays particularly important role in sensory neurons where its activation is critical for gustatory, nociceptive responses, visceral reflexes and sensory hypersensitization. The sequence is that of P2X purinoceptor 3 (P2rx3) from Rattus norvegicus (Rat).